The primary structure comprises 410 residues: Mating-type locus allele B5 protein (410 aa).

Residues 1–110 (MSSDPNFSLT…FNVVSPAVVC (110 aa)) form a variable domain between B alleles region. The segment at residues 107–184 (AVVCRNLSED…NARRRSGWSH (78 aa)) is a DNA-binding region (homeobox; TALE-type). The segment at 111–410 (RNLSEDLPAY…PFLCLSVAFV (300 aa)) is highly conserved between B alleles. Disordered regions lie at residues 201-241 (VRAK…TPAD), 275-336 (NKKT…PELS), and 366-395 (ILQS…PDEV). Positions 206-222 (SSSNQSTPPSPTSEYPS) are enriched in low complexity. The short motif at 276 to 308 (KKTPKPGMPRPVTTVTKRQPARKTKPAAKPKSR) is the Nuclear localization signal element. Positions 294–307 (QPARKTKPAAKPKS) are enriched in basic residues. The span at 312 to 336 (PRASTTPSIDSTLDSSKLESTPELS) shows a compositional bias: polar residues. The segment at 333–410 (PELSMCSTAD…PFLCLSVAFV (78 aa)) is not essential for B5 function. Over residues 375–388 (RGNRKVKALPKRAG) the composition is skewed to basic residues.

This sequence belongs to the TALE/M-ATYP homeobox family.

The protein localises to the nucleus. The B locus has at least 25 alleles, and any combination of two different B alleles yields a multimeric regulatory protein, that activates genes responsible for the pathogenicity and for the sexual development of the fungus within the corn plant. The chain is Mating-type locus allele B5 protein from Mycosarcoma maydis (Corn smut fungus).